Here is a 101-residue protein sequence, read N- to C-terminus: Large ribosomal subunit protein uL23 (101 aa).

The protein belongs to the universal ribosomal protein uL23 family. Part of the 50S ribosomal subunit. Contacts protein L29, and trigger factor when it is bound to the ribosome.

One of the early assembly proteins it binds 23S rRNA. One of the proteins that surrounds the polypeptide exit tunnel on the outside of the ribosome. Forms the main docking site for trigger factor binding to the ribosome. The sequence is that of Large ribosomal subunit protein uL23 from Nocardia farcinica (strain IFM 10152).